Consider the following 430-residue polypeptide: Histidine--tRNA ligase (430 aa).

It belongs to the class-II aminoacyl-tRNA synthetase family.

It is found in the cytoplasm. The enzyme catalyses tRNA(His) + L-histidine + ATP = L-histidyl-tRNA(His) + AMP + diphosphate + H(+). This is Histidine--tRNA ligase from Metallosphaera sedula (strain ATCC 51363 / DSM 5348 / JCM 9185 / NBRC 15509 / TH2).